The sequence spans 271 residues: Phosphate import ATP-binding protein PstB 1 (271 aa).

The ABC transporter domain maps to 24–266; that stretch reads MIGKDVSVYY…PDDPRTQDYI (243 aa). 56-63 contacts ATP; sequence GPSGCGKS.

Belongs to the ABC transporter superfamily. Phosphate importer (TC 3.A.1.7) family. The complex is composed of two ATP-binding proteins (PstB), two transmembrane proteins (PstC and PstA) and a solute-binding protein (PstS).

The protein resides in the cell inner membrane. It carries out the reaction phosphate(out) + ATP + H2O = ADP + 2 phosphate(in) + H(+). Part of the ABC transporter complex PstSACB involved in phosphate import. Responsible for energy coupling to the transport system. The chain is Phosphate import ATP-binding protein PstB 1 from Rhizobium johnstonii (strain DSM 114642 / LMG 32736 / 3841) (Rhizobium leguminosarum bv. viciae).